The sequence spans 188 residues: Protein TIFY 9 (188 aa).

Residues 20–41 form a disordered region; sequence DADDRHAKSGGSSASSSSSIRG. A compositionally biased stretch (low complexity) spans 28–38; it reads SGGSSASSSSS. The Tify domain occupies 80-114; it reads AAAAAAPMTLFYNGSVAVFDVSHDKAEAIMRMATE. A Jas motif is present at residues 135–160; sequence PLTRTKSLQRFLSKRKERLTSLGPYQ. Residues 156–188 form a disordered region; it reads LGPYQVGGPAAVGATTSTTTKSFLAKEEEHTAS. Basic and acidic residues predominate over residues 179–188; sequence LAKEEEHTAS.

It belongs to the TIFY/JAZ family. In terms of processing, ubiquitinated. Targeted for degradation by the SCF(COI1) E3 ubiquitin ligase-proteasome pathway during jasmonate signaling.

Its function is as follows. Repressor of jasmonate responses. This is Protein TIFY 9 from Oryza sativa subsp. indica (Rice).